We begin with the raw amino-acid sequence, 336 residues long: Flap endonuclease 1 (336 aa).

The interval 1–98 (MGADIGDLFE…AEIEERKKRR (98 aa)) is N-domain. 7 residues coordinate Mg(2+): Asp27, Asp80, Glu151, Glu153, Asp172, Asp174, and Asp235. Positions 115 to 256 (DAKKYAQAAG…KALNYIKTYG (142 aa)) are I-domain. Residues 328 to 336 (TQATLERWF) form an interaction with PCNA region.

Belongs to the XPG/RAD2 endonuclease family. FEN1 subfamily. Interacts with PCNA. PCNA stimulates the nuclease activity without altering cleavage specificity. Mg(2+) is required as a cofactor.

Structure-specific nuclease with 5'-flap endonuclease and 5'-3' exonuclease activities involved in DNA replication and repair. During DNA replication, cleaves the 5'-overhanging flap structure that is generated by displacement synthesis when DNA polymerase encounters the 5'-end of a downstream Okazaki fragment. Binds the unpaired 3'-DNA end and kinks the DNA to facilitate 5' cleavage specificity. Cleaves one nucleotide into the double-stranded DNA from the junction in flap DNA, leaving a nick for ligation. Also involved in the base excision repair (BER) pathway. Acts as a genome stabilization factor that prevents flaps from equilibrating into structures that lead to duplications and deletions. Also possesses 5'-3' exonuclease activity on nicked or gapped double-stranded DNA. This chain is Flap endonuclease 1, found in Archaeoglobus fulgidus (strain ATCC 49558 / DSM 4304 / JCM 9628 / NBRC 100126 / VC-16).